We begin with the raw amino-acid sequence, 134 residues long: Small ribosomal subunit protein uS8c (134 aa).

This sequence belongs to the universal ribosomal protein uS8 family. In terms of assembly, part of the 30S ribosomal subunit.

The protein resides in the plastid. It is found in the chloroplast. One of the primary rRNA binding proteins, it binds directly to 16S rRNA central domain where it helps coordinate assembly of the platform of the 30S subunit. The sequence is that of Small ribosomal subunit protein uS8c (rps8) from Nicotiana tabacum (Common tobacco).